Here is an 874-residue protein sequence, read N- to C-terminus: DNA mismatch repair protein MutS (874 aa).

Over residues Met-1–Ala-12 the composition is skewed to basic and acidic residues. The segment at Met-1–Gly-20 is disordered. Gly-661–Ser-668 serves as a coordination point for ATP. The interval Arg-854–Phe-874 is disordered.

It belongs to the DNA mismatch repair MutS family.

This protein is involved in the repair of mismatches in DNA. It is possible that it carries out the mismatch recognition step. This protein has a weak ATPase activity. In Thermosynechococcus vestitus (strain NIES-2133 / IAM M-273 / BP-1), this protein is DNA mismatch repair protein MutS.